A 229-amino-acid polypeptide reads, in one-letter code: Large ribosomal subunit protein uL1 (229 aa).

The protein belongs to the universal ribosomal protein uL1 family. In terms of assembly, part of the 50S ribosomal subunit.

Its function is as follows. Binds directly to 23S rRNA. The L1 stalk is quite mobile in the ribosome, and is involved in E site tRNA release. In terms of biological role, protein L1 is also a translational repressor protein, it controls the translation of the L11 operon by binding to its mRNA. This Streptococcus pyogenes serotype M3 (strain SSI-1) protein is Large ribosomal subunit protein uL1.